Consider the following 428-residue polypeptide: Gamma-glutamyl phosphate reductase (428 aa).

Belongs to the gamma-glutamyl phosphate reductase family.

It localises to the cytoplasm. It carries out the reaction L-glutamate 5-semialdehyde + phosphate + NADP(+) = L-glutamyl 5-phosphate + NADPH + H(+). Its pathway is amino-acid biosynthesis; L-proline biosynthesis; L-glutamate 5-semialdehyde from L-glutamate: step 2/2. Catalyzes the NADPH-dependent reduction of L-glutamate 5-phosphate into L-glutamate 5-semialdehyde and phosphate. The product spontaneously undergoes cyclization to form 1-pyrroline-5-carboxylate. In Chelativorans sp. (strain BNC1), this protein is Gamma-glutamyl phosphate reductase.